Consider the following 350-residue polypeptide: tRNA uridine(34) hydroxylase (350 aa).

The region spanning 128-221 (EETDYVMIDT…YMKEYPNDQF (94 aa)) is the Rhodanese domain. The Cysteine persulfide intermediate role is filled by Cys-181.

The protein belongs to the TrhO family.

The enzyme catalyses uridine(34) in tRNA + AH2 + O2 = 5-hydroxyuridine(34) in tRNA + A + H2O. Catalyzes oxygen-dependent 5-hydroxyuridine (ho5U) modification at position 34 in tRNAs. This chain is tRNA uridine(34) hydroxylase, found in Bdellovibrio bacteriovorus (strain ATCC 15356 / DSM 50701 / NCIMB 9529 / HD100).